The primary structure comprises 181 residues: Oligoribonuclease (181 aa).

One can recognise an Exonuclease domain in the interval 8 to 171 (LIWVDLEMTG…DDIRESIAEL (164 aa)). Tyr-129 is a catalytic residue.

This sequence belongs to the oligoribonuclease family.

Its subcellular location is the cytoplasm. 3'-to-5' exoribonuclease specific for small oligoribonucleotides. This chain is Oligoribonuclease, found in Vibrio campbellii (strain ATCC BAA-1116).